Consider the following 261-residue polypeptide: Shikimate dehydrogenase (NADP(+)) (261 aa).

Residues 13 to 15 (SLS) and Thr60 contribute to the shikimate site. Lys64 functions as the Proton acceptor in the catalytic mechanism. Glu76 is an NADP(+) binding site. 2 residues coordinate shikimate: Asn85 and Asp100. Residues 122–126 (GAGGA), 143–148 (NRTVER), and Ile203 each bind NADP(+). Position 205 (Tyr205) interacts with shikimate. NADP(+) is bound at residue Gly226.

This sequence belongs to the shikimate dehydrogenase family. Homodimer.

The catalysed reaction is shikimate + NADP(+) = 3-dehydroshikimate + NADPH + H(+). The protein operates within metabolic intermediate biosynthesis; chorismate biosynthesis; chorismate from D-erythrose 4-phosphate and phosphoenolpyruvate: step 4/7. Involved in the biosynthesis of the chorismate, which leads to the biosynthesis of aromatic amino acids. Catalyzes the reversible NADPH linked reduction of 3-dehydroshikimate (DHSA) to yield shikimate (SA). The sequence is that of Shikimate dehydrogenase (NADP(+)) from Exiguobacterium sp. (strain ATCC BAA-1283 / AT1b).